Reading from the N-terminus, the 768-residue chain is 5-methyltetrahydropteroyltriglutamate--homocysteine methyltransferase (768 aa).

Residues 17–20 and Lys-117 contribute to the 5-methyltetrahydropteroyltri-L-glutamate site; that span reads RELK. Residues 442-444 and Glu-495 each bind L-homocysteine; that span reads IGS. Residues 442–444 and Glu-495 contribute to the L-methionine site; that span reads IGS. 5-methyltetrahydropteroyltri-L-glutamate-binding positions include 526-527 and Trp-572; that span reads RC. L-homocysteine is bound at residue Asp-610. Asp-610 contacts L-methionine. Residue Glu-616 participates in 5-methyltetrahydropteroyltri-L-glutamate binding. Residues His-653, Cys-655, and Glu-677 each coordinate Zn(2+). The Proton donor role is filled by His-706. Position 738 (Cys-738) interacts with Zn(2+).

It belongs to the vitamin-B12 independent methionine synthase family. Zn(2+) serves as cofactor.

It carries out the reaction 5-methyltetrahydropteroyltri-L-glutamate + L-homocysteine = tetrahydropteroyltri-L-glutamate + L-methionine. It functions in the pathway amino-acid biosynthesis; L-methionine biosynthesis via de novo pathway; L-methionine from L-homocysteine (MetE route): step 1/1. Functionally, catalyzes the transfer of a methyl group from 5-methyltetrahydrofolate to homocysteine resulting in methionine formation. This Bifidobacterium adolescentis (strain ATCC 15703 / DSM 20083 / NCTC 11814 / E194a) protein is 5-methyltetrahydropteroyltriglutamate--homocysteine methyltransferase.